The sequence spans 328 residues: NAD(P)H-dependent pentose reductase (328 aa).

The active-site Proton donor is Y50. H112 serves as a coordination point for substrate. Residues 174–175 (AN), 223–232 (SSFGPQSFVE), and 279–289 (KSNNVDRLKQN) each bind NAD(+).

The protein belongs to the aldo/keto reductase family.

Pentose reductase with a broad substrate affinity involved in pentose catabolism. Has highest reductase activities with L-arabinose and D-xylose as substrates, and displays much lower activities with D-ribose, D-galactose and D-glucose. Has highest dehydrogenase activity with L-arabitol as substrate, followed by xylitol and D-sorbitol. May be responsible for the first step of the L-arabinose catabolic pathway. This Pyricularia oryzae (strain 70-15 / ATCC MYA-4617 / FGSC 8958) (Rice blast fungus) protein is NAD(P)H-dependent pentose reductase (PRD1).